The chain runs to 277 residues: Thiazole synthase (277 aa).

Catalysis depends on Lys119, which acts as the Schiff-base intermediate with DXP. Residues Gly180, 206 to 207 (AG), and 228 to 229 (NT) contribute to the 1-deoxy-D-xylulose 5-phosphate site.

Belongs to the ThiG family. Homotetramer. Forms heterodimers with either ThiH or ThiS.

The protein resides in the plastid. Its subcellular location is the chloroplast. It carries out the reaction [ThiS sulfur-carrier protein]-C-terminal-Gly-aminoethanethioate + 2-iminoacetate + 1-deoxy-D-xylulose 5-phosphate = [ThiS sulfur-carrier protein]-C-terminal Gly-Gly + 2-[(2R,5Z)-2-carboxy-4-methylthiazol-5(2H)-ylidene]ethyl phosphate + 2 H2O + H(+). The protein operates within cofactor biosynthesis; thiamine diphosphate biosynthesis. Functionally, catalyzes the rearrangement of 1-deoxy-D-xylulose 5-phosphate (DXP) to produce the thiazole phosphate moiety of thiamine. Sulfur is provided by the thiocarboxylate moiety of the carrier protein ThiS. In vitro, sulfur can be provided by H(2)S. In Pyropia yezoensis (Susabi-nori), this protein is Thiazole synthase.